A 405-amino-acid polypeptide reads, in one-letter code: Tryptophan synthase beta chain (405 aa).

Position 98 is an N6-(pyridoxal phosphate)lysine (K98).

It belongs to the TrpB family. In terms of assembly, tetramer of two alpha and two beta chains. Pyridoxal 5'-phosphate is required as a cofactor.

The catalysed reaction is (1S,2R)-1-C-(indol-3-yl)glycerol 3-phosphate + L-serine = D-glyceraldehyde 3-phosphate + L-tryptophan + H2O. Its pathway is amino-acid biosynthesis; L-tryptophan biosynthesis; L-tryptophan from chorismate: step 5/5. In terms of biological role, the beta subunit is responsible for the synthesis of L-tryptophan from indole and L-serine. In Bradyrhizobium diazoefficiens (strain JCM 10833 / BCRC 13528 / IAM 13628 / NBRC 14792 / USDA 110), this protein is Tryptophan synthase beta chain.